The sequence spans 702 residues: Methionine--tRNA ligase (702 aa).

The short motif at P23 to H33 is the 'HIGH' region element. Zn(2+) contacts are provided by C154, C157, C167, and C170. Residues K341–S345 carry the 'KMSKS' region motif. K344 is a binding site for ATP. A disordered region spans residues L562 to P593. The span at A569–N578 shows a compositional bias: polar residues. Residues D599–R702 form the tRNA-binding domain.

Belongs to the class-I aminoacyl-tRNA synthetase family. MetG type 1 subfamily. Homodimer. Requires Zn(2+) as cofactor.

It is found in the cytoplasm. It carries out the reaction tRNA(Met) + L-methionine + ATP = L-methionyl-tRNA(Met) + AMP + diphosphate. Functionally, is required not only for elongation of protein synthesis but also for the initiation of all mRNA translation through initiator tRNA(fMet) aminoacylation. The sequence is that of Methionine--tRNA ligase from Xylella fastidiosa (strain M12).